The primary structure comprises 443 residues: KICSTOR complex protein ITFG2 (443 aa).

Residues 19–48 (FPHAICLGDVDNDALNELVVGDTSGKLSVY) form an FG-GAP 1; atypical repeat. Residue serine 104 is modified to Phosphoserine. An FG-GAP 2; atypical repeat occupies 125–154 (NTKVMLISDIDGDGCYELVVGYTDRVVRAF). A Phosphoserine modification is found at serine 219.

In terms of assembly, part of the KICSTOR complex composed of KPTN, ITFG2, KICS2 and SZT2. SZT2 probably serves as a link between the other three proteins in the KICSTOR complex and may mediate the direct interaction with the GATOR complex via GATOR1. The KICSTOR complex interacts directly with the GATOR1 complex and most probably indirectly with the GATOR2 complex in an amino acid-independent manner.

The protein localises to the lysosome membrane. As part of the KICSTOR complex functions in the amino acid-sensing branch of the TORC1 signaling pathway. Recruits, in an amino acid-independent manner, the GATOR1 complex to the lysosomal membranes and allows its interaction with GATOR2 and the RAG GTPases. Functions upstream of the RAG GTPases and is required to negatively regulate mTORC1 signaling in absence of amino acids. In absence of the KICSTOR complex mTORC1 is constitutively localized to the lysosome and activated. The KICSTOR complex is also probably involved in the regulation of mTORC1 by glucose. This is KICSTOR complex protein ITFG2 from Mus musculus (Mouse).